We begin with the raw amino-acid sequence, 284 residues long: Ribosomal RNA small subunit methyltransferase A (284 aa).

The S-adenosyl-L-methionine site is built by N26, L28, G53, E74, D97, and N127.

The protein belongs to the class I-like SAM-binding methyltransferase superfamily. rRNA adenine N(6)-methyltransferase family. RsmA subfamily.

Its subcellular location is the cytoplasm. It catalyses the reaction adenosine(1518)/adenosine(1519) in 16S rRNA + 4 S-adenosyl-L-methionine = N(6)-dimethyladenosine(1518)/N(6)-dimethyladenosine(1519) in 16S rRNA + 4 S-adenosyl-L-homocysteine + 4 H(+). Its function is as follows. Specifically dimethylates two adjacent adenosines (A1518 and A1519) in the loop of a conserved hairpin near the 3'-end of 16S rRNA in the 30S particle. May play a critical role in biogenesis of 30S subunits. This chain is Ribosomal RNA small subunit methyltransferase A, found in Anaeromyxobacter dehalogenans (strain 2CP-C).